Reading from the N-terminus, the 480-residue chain is Ammonium transporter 3 member 3 (480 aa).

The next 11 helical transmembrane spans lie at 31–51, 59–79, 135–155, 169–189, 198–218, 233–253, 265–287, 292–314, 318–337, 361–381, and 407–427; these read SATL…GSIV, SAFM…VWAY, MVYF…GSLL, LWIT…GFLF, GGYV…YWVG, ILLV…FNGG, AVLN…DVFF, SVIG…AGLV, AAIV…MMVL, GFLG…SLFL, and LFVT…ISLI.

Belongs to the ammonia transporter channel (TC 1.A.11.2) family.

The protein resides in the membrane. In terms of biological role, involved in ammonium transport. This chain is Ammonium transporter 3 member 3 (AMT3-3), found in Oryza sativa subsp. japonica (Rice).